A 415-amino-acid chain; its full sequence is MTVDLNKMGQAAREASRQLALLGEQKKNQVLETVAQELLAKADEIIAANKVDLENATNMPEKFIDRLKIDNDRIAAMAEGVRQVAQLADPIGKIDAGWVNYAGLQIEKKRVPLGVVGMIFEARPNVTVDASALCFKSGNAVILRGGKEALQTNIKITKVIRQALEQEGINPDAVQVITETSHELANEFMQLTDYLDVLIPRGSARLIQTVLNTAKVPVIETGAGICHVYVDKFADKKMAVEITTNAKVQRPSVCNAIENLVIHQDVAQEYLPAIADELQKYNVELRGDEKVCEILGDKATLATAEDWDTEYNDYIIAIKIVSSIDEAIDFINEHNTKHSEAIITENYTRSQKFLDEIDAACVYVNASTRFTDGFEFGFGAEIGISTQKLHARGPMGLEALTSTKYVIRGNGQIRK.

Belongs to the gamma-glutamyl phosphate reductase family.

The protein resides in the cytoplasm. It catalyses the reaction L-glutamate 5-semialdehyde + phosphate + NADP(+) = L-glutamyl 5-phosphate + NADPH + H(+). It participates in amino-acid biosynthesis; L-proline biosynthesis; L-glutamate 5-semialdehyde from L-glutamate: step 2/2. Its function is as follows. Catalyzes the NADPH-dependent reduction of L-glutamate 5-phosphate into L-glutamate 5-semialdehyde and phosphate. The product spontaneously undergoes cyclization to form 1-pyrroline-5-carboxylate. This is Gamma-glutamyl phosphate reductase from Ligilactobacillus salivarius (strain UCC118) (Lactobacillus salivarius).